The primary structure comprises 427 residues: UDP-N-acetyl-D-mannosamine dehydrogenase (427 aa).

Residues Tyr19, Ile20, Asp39, Arg44, Thr91, and Thr130 each contribute to the NAD(+) site. 8 residues coordinate UDP-N-acetyl-alpha-D-mannosaminouronate: Arg155, Val156, Lys207, Asn211, Arg214, His245, Arg247, and Gly258. The active-site Proton donor/acceptor is the Lys207. Cys261 acts as the Nucleophile in catalysis. UDP-N-acetyl-alpha-D-mannosaminouronate contacts are provided by Tyr318 and Lys319. Arg326 provides a ligand contact to NAD(+). Position 404 (Lys404) interacts with UDP-N-acetyl-alpha-D-mannosaminouronate.

The protein belongs to the UDP-glucose/GDP-mannose dehydrogenase family. In terms of assembly, homotetramer; probably dimer of dimers.

The enzyme catalyses UDP-N-acetyl-alpha-D-mannosamine + 2 NAD(+) + H2O = UDP-N-acetyl-alpha-D-mannosaminouronate + 2 NADH + 3 H(+). In terms of biological role, catalyzes the four-electron oxidation of UDP-N-acetyl-D-mannosamine (UDP-ManNAc), reducing NAD(+) and releasing UDP-N-acetylmannosaminuronic acid (UDP-ManNAcA). The chain is UDP-N-acetyl-D-mannosamine dehydrogenase (wecC) from Methanococcus maripaludis (strain C7 / ATCC BAA-1331).